A 221-amino-acid polypeptide reads, in one-letter code: Endonuclease V (221 aa).

Residues Asp-44 and Asp-112 each coordinate Mg(2+).

The protein belongs to the endonuclease V family. The cofactor is Mg(2+).

Its subcellular location is the cytoplasm. It carries out the reaction Endonucleolytic cleavage at apurinic or apyrimidinic sites to products with a 5'-phosphate.. DNA repair enzyme involved in the repair of deaminated bases. Selectively cleaves double-stranded DNA at the second phosphodiester bond 3' to a deoxyinosine leaving behind the intact lesion on the nicked DNA. The protein is Endonuclease V of Nostoc sp. (strain PCC 7120 / SAG 25.82 / UTEX 2576).